Consider the following 355-residue polypeptide: Nicotinate-nucleotide--dimethylbenzimidazole phosphoribosyltransferase (355 aa).

Residue Glu321 is the Proton acceptor of the active site.

This sequence belongs to the CobT family.

The catalysed reaction is 5,6-dimethylbenzimidazole + nicotinate beta-D-ribonucleotide = alpha-ribazole 5'-phosphate + nicotinate + H(+). Its pathway is nucleoside biosynthesis; alpha-ribazole biosynthesis; alpha-ribazole from 5,6-dimethylbenzimidazole: step 1/2. Catalyzes the synthesis of alpha-ribazole-5'-phosphate from nicotinate mononucleotide (NAMN) and 5,6-dimethylbenzimidazole (DMB). The protein is Nicotinate-nucleotide--dimethylbenzimidazole phosphoribosyltransferase of Desulfotalea psychrophila (strain LSv54 / DSM 12343).